A 153-amino-acid polypeptide reads, in one-letter code: 3-hydroxyacyl-[acyl-carrier-protein] dehydratase FabZ (153 aa).

Histidine 54 is a catalytic residue.

Belongs to the thioester dehydratase family. FabZ subfamily.

Its subcellular location is the cytoplasm. The enzyme catalyses a (3R)-hydroxyacyl-[ACP] = a (2E)-enoyl-[ACP] + H2O. Its function is as follows. Involved in unsaturated fatty acids biosynthesis. Catalyzes the dehydration of short chain beta-hydroxyacyl-ACPs and long chain saturated and unsaturated beta-hydroxyacyl-ACPs. The protein is 3-hydroxyacyl-[acyl-carrier-protein] dehydratase FabZ of Shewanella loihica (strain ATCC BAA-1088 / PV-4).